A 310-amino-acid chain; its full sequence is Metal ABC transporter substrate-binding lipoprotein ScbA (310 aa).

A signal peptide spans 1–19; that stretch reads MKKCRFLVLLLLAFVGLAA. Cys-20 is lipidated: N-palmitoyl cysteine. A lipid anchor (S-diacylglycerol cysteine) is attached at Cys-20. Residues His-68, His-140, Glu-206, and Asp-281 each contribute to the a divalent metal cation site.

It belongs to the bacterial solute-binding protein 9 family.

Its subcellular location is the cell membrane. Part of an ATP-binding cassette (ABC) transport system involved in metal import. Binds a metal with high affinity and specificity and delivers it to the membrane permease for translocation into the cytoplasm. Part of an ATP-driven transport system for manganese. Does not exhibit adhesion properties. This chain is Metal ABC transporter substrate-binding lipoprotein ScbA (scbA), found in Streptococcus cristatus.